A 104-amino-acid chain; its full sequence is MPTLTKAELAEMLFEQVGLNKRESKDMVEAFFDVIREALEQGDSVKLSGFGNFQLRDKPQRPGRNPKTGEIIPITARRVVTFHASQKLKALVEERVEPMPASAA.

The disordered stretch occupies residues 51 to 70 (GNFQLRDKPQRPGRNPKTGE).

Belongs to the bacterial histone-like protein family. In terms of assembly, heterodimer of an alpha and a beta chain.

Its function is as follows. This protein is one of the two subunits of integration host factor, a specific DNA-binding protein that functions in genetic recombination as well as in transcriptional and translational control. The chain is Integration host factor subunit alpha from Ralstonia nicotianae (strain ATCC BAA-1114 / GMI1000) (Ralstonia solanacearum).